A 90-amino-acid chain; its full sequence is Lantipeptide prochlorosin 1.7 (90 aa).

Positions 1–68 are excised as a propeptide; that stretch reads MSEEQLKAFI…DAELEGVAGG (68 aa). Residues Thr69 and Thr73 each carry the 2,3-didehydrobutyrine modification. Residues 76-79 constitute a cross-link (lanthionine (Ser-Cys)); that stretch reads SITC. 2 cross-links (beta-methyllanthionine (Thr-Cys)) span residues 78 to 82 and 81 to 90; these read TCETC and TCDLLVGKMC.

Post-translationally, cross-links are proved in vitro, when coepressed in E.coli with the ProcM lanthionine synthetase. The lanthionine residue has a DL configuration (with 2S,6R stereochemistry), whereas the beta-methyllanthionine residues have a DL configuration (with 2S,3S,6R stereochemistry). In terms of processing, maturation of prochlorosin involves the enzymatic conversion of Thr, and Ser into dehydrated AA and the formation of thioether bonds with cysteines. This is followed by membrane translocation and cleavage of the modified precursor.

It localises to the secreted. Its function is as follows. Lanthionine-containing peptide (lantipeptide) with unknown function. Does not show antibiotic activity against Lactococcus lactis 117 and Bacillus subtilis 6633 bacteria. Organisms that produce this peptide live in oligotrophic environments at very dilute concentrations, suggesting this peptide is not secreted to influence other bacteria. The polypeptide is Lantipeptide prochlorosin 1.7 (Prochlorococcus marinus (strain MIT 9313)).